The primary structure comprises 178 residues: CASP-like protein 5A1 (178 aa).

Residues 1–11 (MFASRPAVHPV) are compositionally biased toward low complexity. The interval 1 to 25 (MFASRPAVHPVEAPPPPDPAEQPRG) is disordered. The Cytoplasmic portion of the chain corresponds to 1 to 37 (MFASRPAVHPVEAPPPPDPAEQPRGVLMKDLPGMPGT). The chain crosses the membrane as a helical span at residues 38–58 (AGGLGLRLAQFAFAAVALAVM). The Extracellular segment spans residues 59 to 69 (ASTNDFPSVTS). The helical transmembrane segment at 70–90 (FCFLVAAAILQCLWSFSLAIV) threads the bilayer. The Cytoplasmic segment spans residues 91 to 105 (DIYALLVKRCLRNRR). A helical membrane pass occupies residues 106–126 (AVCLFAIGDGITAALTFSAAC). Residues 127–152 (ASSGITVLIDNDLDLCSENHCASFES) are Extracellular-facing. A helical membrane pass occupies residues 153-173 (ATAMAFLSWFALSPSFLLNFW). Over 174–178 (SMASG) the chain is Cytoplasmic.

Belongs to the Casparian strip membrane proteins (CASP) family. In terms of assembly, homodimer and heterodimers.

The protein resides in the cell membrane. The polypeptide is CASP-like protein 5A1 (Oryza sativa subsp. japonica (Rice)).